Consider the following 393-residue polypeptide: RNA polymerase II holoenzyme cyclin-like subunit (393 aa).

Positions 51–146 (ICKRLNLRQR…LLEEMEFDMV (96 aa)) constitute a Cyclin N-terminal domain.

It belongs to the cyclin family. Cyclin C subfamily. As to quaternary structure, component of the SRB8-11 complex, a regulatory module of the Mediator complex.

The protein resides in the nucleus. In terms of biological role, component of the SRB8-11 complex. The SRB8-11 complex is a regulatory module of the Mediator complex which is itself involved in regulation of basal and activated RNA polymerase II-dependent transcription. The SRB8-11 complex may be involved in the transcriptional repression of a subset of genes regulated by Mediator. It may inhibit the association of the Mediator complex with RNA polymerase II to form the holoenzyme complex. The SRB8-11 complex phosphorylates the C-terminal domain (CTD) of the largest subunit of RNA polymerase II. The protein is RNA polymerase II holoenzyme cyclin-like subunit (SSN8) of Mycosarcoma maydis (Corn smut fungus).